A 229-amino-acid chain; its full sequence is Glutamine amidotransferase-like class 1 domain-containing protein 1 (229 aa).

The N-terminal stretch at 1–34 (MKKQGAPVSGGGTERLTKPSCLMVGSAVAEGVSA) is a signal peptide. Asparagine 154 and asparagine 212 each carry an N-linked (GlcNAc...) asparagine glycan.

It belongs to the peptidase C56 family. As to quaternary structure, homotetramer. Component of the FERRY complex.

It is found in the secreted. The protein localises to the early endosome. Functionally, component of the FERRY complex (Five-subunit Endosomal Rab5 and RNA/ribosome intermediary). The FERRY complex directly interacts with mRNAs and RAB5A, and functions as a RAB5A effector involved in the localization and the distribution of specific mRNAs most likely by mediating their endosomal transport. The complex recruits mRNAs and ribosomes to early endosomes through direct mRNA-interaction. In Xenopus laevis (African clawed frog), this protein is Glutamine amidotransferase-like class 1 domain-containing protein 1.